The sequence spans 562 residues: Arginine--tRNA ligase 1 (562 aa).

The 'HIGH' region signature appears at 122–132 (PNIAKPFSMGH).

The protein belongs to the class-I aminoacyl-tRNA synthetase family. In terms of assembly, monomer.

It localises to the cytoplasm. The enzyme catalyses tRNA(Arg) + L-arginine + ATP = L-arginyl-tRNA(Arg) + AMP + diphosphate. In Bacillus cereus (strain ZK / E33L), this protein is Arginine--tRNA ligase 1.